The following is a 944-amino-acid chain: ATP-dependent helicase fft1 (944 aa).

Disordered regions lie at residues 89-109 and 174-246; these read AAYD…ESSN and SAQK…NSIP. Basic and acidic residues predominate over residues 92 to 108; it reads DPHDQPPERDVSLKESS. Positions 174–184 are enriched in polar residues; sequence SAQKLNNQPIE. The segment covering 186–203 has biased composition (basic and acidic residues); the sequence is SSVDKENAKRKRYVEEGT. The span at 217–227 shows a compositional bias: acidic residues; it reads LSDEETNEDDL. Residues 230–246 are compositionally biased toward polar residues; the sequence is QSPTACTTDANIDNSIP. The 167-residue stretch at 426-592 folds into the Helicase ATP-binding domain; it reads CLMYKAKLSG…ISLLAFMLPK (167 aa). 439 to 446 serves as a coordination point for ATP; it reads DEMGLGKT. Residues 543–546 carry the DEGH box motif; sequence DEGH. Residues 766–923 form the Helicase C-terminal domain; sequence KVKKLCSLLK…DSEKIQKEIS (158 aa).

Belongs to the SNF2/RAD54 helicase family.

Its subcellular location is the nucleus. It carries out the reaction ATP + H2O = ADP + phosphate + H(+). In terms of biological role, DNA helicase that possesses intrinsic ATP-dependent nucleosome-remodeling activity and is required for heterochromatin organization. The protein is ATP-dependent helicase fft1 (fft1) of Schizosaccharomyces pombe (strain 972 / ATCC 24843) (Fission yeast).